Reading from the N-terminus, the 180-residue chain is Protein YOP1 (180 aa).

S2 bears the N-acetylserine mark. The interaction with YIP1 stretch occupies residues 2-17; sequence SEYASSIHSQMKQFDT. Residues 2–35 lie on the Cytoplasmic side of the membrane; it reads SEYASSIHSQMKQFDTKYSGNRILQQLENKTNLP. A helical membrane pass occupies residues 36-55; that stretch reads KSYLVAGLGFAYLLLIFINV. The Lumenal segment spans residues 56–57; the sequence is GG. Residues 58-78 form a helical membrane-spanning segment; the sequence is VGEILSNFAGFVLPAYLSLVA. Topologically, residues 79-88 are cytoplasmic; sequence LKTPTSTDDT. The helical transmembrane segment at 89 to 105 threads the bilayer; it reads QLLTYWIVFSFLSVIEF. Residues 106–108 are Lumenal-facing; that stretch reads WSK. A helical membrane pass occupies residues 109–127; that stretch reads AILYLIPFYWFLKTVFLIY. Over 128-180 the chain is Cytoplasmic; sequence IALPQTGGARMIYQKIVAPLTDRYILRDVSKTEKDEIRASVNEASKATGASVH.

It belongs to the DP1 family. Oligomer. Interacts with YIP1.

It localises to the endoplasmic reticulum membrane. Its subcellular location is the golgi apparatus membrane. Required to generate and maintain the structure of the tubular endoplasmic reticulum network and the vacuole. Induces high curvature in membranes and causes membrane tubule formation. Involved in membrane/vesicle trafficking. The sequence is that of Protein YOP1 (YOP1) from Saccharomyces cerevisiae (strain ATCC 204508 / S288c) (Baker's yeast).